The primary structure comprises 166 residues: Sec-independent protein translocase protein TatB (166 aa).

A helical membrane pass occupies residues 2 to 22; sequence FDGIGFMELLLIGVLGLVVLG. A disordered region spans residues 69–166; it reads SKGLSNLSPE…DTRSNPKANG (98 aa). 2 stretches are compositionally biased toward polar residues: residues 88–97 and 112–132; these read QAAQSVNRPY and QIYS…SQAN. Low complexity predominate over residues 133 to 153; it reads PTATVEASPAPASPATPSEPS. Residues 155–166 are compositionally biased toward polar residues; that stretch reads GADTRSNPKANG.

The protein belongs to the TatB family. In terms of assembly, the Tat system comprises two distinct complexes: a TatABC complex, containing multiple copies of TatA, TatB and TatC subunits, and a separate TatA complex, containing only TatA subunits. Substrates initially bind to the TatABC complex, which probably triggers association of the separate TatA complex to form the active translocon.

Its subcellular location is the cell inner membrane. Part of the twin-arginine translocation (Tat) system that transports large folded proteins containing a characteristic twin-arginine motif in their signal peptide across membranes. Together with TatC, TatB is part of a receptor directly interacting with Tat signal peptides. TatB may form an oligomeric binding site that transiently accommodates folded Tat precursor proteins before their translocation. This Shewanella baltica (strain OS155 / ATCC BAA-1091) protein is Sec-independent protein translocase protein TatB.